Here is a 355-residue protein sequence, read N- to C-terminus: Heterogeneous nuclear ribonucleoprotein D0 (355 aa).

The segment at 1–92 (MSEEQFGGDG…SPRHSEAATA (92 aa)) is disordered. Position 2 is an N-acetylserine (S2). Low complexity-rich tracts occupy residues 11-20 (AAAAATAAVG) and 27-42 (EGAM…AAAG). The segment covering 43–58 (SGAGTGGGTASGGTEG) has biased composition (gly residues). Positions 64–73 (EGAKIDASKN) are enriched in basic and acidic residues. Phosphoserine is present on S71. K72 participates in a covalent cross-link: Glycyl lysine isopeptide (Lys-Gly) (interchain with G-Cter in SUMO2). A phosphoserine mark is found at S80, S82, and S83. T91 bears the Phosphothreonine mark. RRM domains lie at 97-179 (WKMF…KTKE) and 182-261 (KKIF…MSKE). The residue at position 119 (K119) is an N6-methyllysine. Phosphothreonine is present on T127. Residue K129 forms a Glycyl lysine isopeptide (Lys-Gly) (interchain with G-Cter in SUMO2) linkage. K165 carries the post-translational modification N6-acetyllysine. Position 190 is a phosphoserine (S190). T193 is modified (phosphothreonine). Residue K197 forms a Glycyl lysine isopeptide (Lys-Gly) (interchain with G-Cter in SUMO2) linkage. N6-acetyllysine is present on residues K243 and K251. Position 263 is an omega-N-methylarginine (Y263). S271 carries the phosphoserine modification. R272 bears the Omega-N-methylarginine mark. G273 carries the N6-acetyllysine modification. 3 positions are modified to omega-N-methylarginine: R278, R280, and R282. Residue Q292 is modified to N6-acetyllysine. R345 is modified (asymmetric dimethylarginine; alternate). The residue at position 345 (R345) is a Dimethylated arginine; alternate. R345 is subject to Omega-N-methylarginine; alternate.

Identified in a IGF2BP1-dependent mRNP granule complex containing untranslated mRNAs. Part of a complex associated with the FOS mCRD domain and consisting of PABPC1, PAIP1, CSDE1/UNR and SYNCRIP. Interacts with IGF2BP2. Interacts with GTPBP1. Interacts with EIF4G1; the interaction requires RNA. Interacts with EIF3B and RPS3. Arg-345 is dimethylated, probably to asymmetric dimethylarginine. Post-translationally, methylated by PRMT1, in an insulin-dependent manner. The PRMT1-mediated methylation regulates tyrosine phosphorylation.

The protein resides in the nucleus. It localises to the cytoplasm. In terms of biological role, binds with high affinity to RNA molecules that contain AU-rich elements (AREs) found within the 3'-UTR of many proto-oncogenes and cytokine mRNAs. Also binds to double- and single-stranded DNA sequences in a specific manner and functions a transcription factor. Each of the RNA-binding domains specifically can bind solely to a single-stranded non-monotonous 5'-UUAG-3' sequence and also weaker to the single-stranded 5'-TTAGGG-3' telomeric DNA repeat. Binds RNA oligonucleotides with 5'-UUAGGG-3' repeats more tightly than the telomeric single-stranded DNA 5'-TTAGGG-3' repeats. Binding of RRM1 to DNA inhibits the formation of DNA quadruplex structure which may play a role in telomere elongation. May be involved in translationally coupled mRNA turnover. Implicated with other RNA-binding proteins in the cytoplasmic deadenylation/translational and decay interplay of the FOS mRNA mediated by the major coding-region determinant of instability (mCRD) domain. May play a role in the regulation of the rhythmic expression of circadian clock core genes. Directly binds to the 3'UTR of CRY1 mRNA and induces CRY1 rhythmic translation. May also be involved in the regulation of PER2 translation. The chain is Heterogeneous nuclear ribonucleoprotein D0 (HNRNPD) from Homo sapiens (Human).